A 252-amino-acid polypeptide reads, in one-letter code: 7-cyano-7-deazaguanine synthase (252 aa).

Residue 22 to 32 (FSGGQDSTTCL) coordinates ATP. Zn(2+)-binding residues include C215, C230, C233, and C236.

This sequence belongs to the QueC family. Requires Zn(2+) as cofactor.

It carries out the reaction 7-carboxy-7-deazaguanine + NH4(+) + ATP = 7-cyano-7-deazaguanine + ADP + phosphate + H2O + H(+). It participates in purine metabolism; 7-cyano-7-deazaguanine biosynthesis. Its function is as follows. Catalyzes the ATP-dependent conversion of 7-carboxy-7-deazaguanine (CDG) to 7-cyano-7-deazaguanine (preQ(0)). This chain is 7-cyano-7-deazaguanine synthase, found in Granulibacter bethesdensis (strain ATCC BAA-1260 / CGDNIH1).